We begin with the raw amino-acid sequence, 428 residues long: Serine hydroxymethyltransferase (428 aa).

Glycine 120 to isoleucine 122 contacts (6S)-5,6,7,8-tetrahydrofolate. At lysine 226 the chain carries N6-(pyridoxal phosphate)lysine.

This sequence belongs to the SHMT family. In terms of assembly, homodimer. Requires pyridoxal 5'-phosphate as cofactor.

Its subcellular location is the cytoplasm. It catalyses the reaction 5,10-methylenetetrahydromethanopterin + glycine + H2O = 5,6,7,8-tetrahydromethanopterin + L-serine. It functions in the pathway amino-acid biosynthesis; glycine biosynthesis; glycine from L-serine: step 1/1. Its function is as follows. Catalyzes the reversible interconversion of serine and glycine with tetrahydromethanopterin (H4MPT) serving as the one-carbon carrier. Also exhibits a pteridine-independent aldolase activity toward beta-hydroxyamino acids, producing glycine and aldehydes, via a retro-aldol mechanism. The sequence is that of Serine hydroxymethyltransferase from Methanopyrus kandleri (strain AV19 / DSM 6324 / JCM 9639 / NBRC 100938).